The following is a 355-amino-acid chain: G protein alpha i subunit (355 aa).

A lipid anchor (N-myristoyl glycine) is attached at Gly2. Cys3 is lipidated: S-palmitoyl cysteine. The G-alpha domain occupies 33–355; that stretch reads SEVKLLLLGA…KNNLKQIGLF (323 aa). Positions 36-49 are G1 motif; sequence KLLLLGAGESGKST. GTP-binding positions include 41–48, 176–182, 201–205, 270–273, and Ala327; these read GAGESGKS, LRTRVKT, DVGGQ, and NKKD. Positions 48 and 182 each coordinate Mg(2+). A G2 motif region spans residues 174–182; sequence DVLRTRVKT. The segment at 197–206 is G3 motif; the sequence is FKLFDVGGQR. The G4 motif stretch occupies residues 266 to 273; sequence ILFLNKKD. The segment at 325–330 is G5 motif; that stretch reads TCATDT.

This sequence belongs to the G-alpha family. G(i/o/t/z) subfamily. In terms of assembly, g proteins are composed of 3 units; alpha, beta and gamma. The alpha chain contains the guanine nucleotide binding site. Interacts (via GDP- or GTP-bound forms) with loco (via GoLoco and RGS domains). Interacts with raps/pins.

Its subcellular location is the cell membrane. It is found in the apical cell membrane. Guanine nucleotide-binding proteins (G proteins) are involved as modulators or transducers in various transmembrane signaling systems. Plays a role in glial cell differentiation during embryogenesis; loco, Galphao and the G-protein coupled receptor, moody, are required in the surface glia to achieve effective insulation of the nerve cord. In Drosophila melanogaster (Fruit fly), this protein is G protein alpha i subunit (Galphai).